The primary structure comprises 575 residues: Septation ring formation regulator EzrA (575 aa).

The Extracellular segment spans residues 1–8 (MSNGQLIY). Residues 9-27 (LMVAIAVILVLAYVVAIFL) form a helical membrane-spanning segment. At 28 to 575 (RKRNEGRLEA…YEKTRETIRF (548 aa)) the chain is on the cytoplasmic side. Coiled coils occupy residues 105–191 (LKAS…FVTL), 265–301 (LYEAFKKNQENIRQLELDNAEYENGQAQEEINALYDI), 354–416 (VRRI…IEKD), and 456–526 (TASN…IQEA).

This sequence belongs to the EzrA family.

The protein localises to the cell membrane. Negative regulator of FtsZ ring formation; modulates the frequency and position of FtsZ ring formation. Inhibits FtsZ ring formation at polar sites. Interacts either with FtsZ or with one of its binding partners to promote depolymerization. The polypeptide is Septation ring formation regulator EzrA (Streptococcus pneumoniae serotype 4 (strain ATCC BAA-334 / TIGR4)).